The primary structure comprises 446 residues: tRNA-2-methylthio-N(6)-dimethylallyladenosine synthase (446 aa).

Residues 2–119 (KKIYIKTFGC…LPELIAQRRE (118 aa)) enclose the MTTase N-terminal domain. [4Fe-4S] cluster-binding residues include cysteine 11, cysteine 48, cysteine 82, cysteine 156, cysteine 160, and cysteine 163. The Radical SAM core domain occupies 142–376 (RVEGGAAFVS…RIEAQAQGVN (235 aa)). The region spanning 377 to 440 (RSMVGSVQRV…PHSLRGEAVT (64 aa)) is the TRAM domain.

Belongs to the methylthiotransferase family. MiaB subfamily. As to quaternary structure, monomer. It depends on [4Fe-4S] cluster as a cofactor.

It is found in the cytoplasm. It carries out the reaction N(6)-dimethylallyladenosine(37) in tRNA + (sulfur carrier)-SH + AH2 + 2 S-adenosyl-L-methionine = 2-methylsulfanyl-N(6)-dimethylallyladenosine(37) in tRNA + (sulfur carrier)-H + 5'-deoxyadenosine + L-methionine + A + S-adenosyl-L-homocysteine + 2 H(+). Catalyzes the methylthiolation of N6-(dimethylallyl)adenosine (i(6)A), leading to the formation of 2-methylthio-N6-(dimethylallyl)adenosine (ms(2)i(6)A) at position 37 in tRNAs that read codons beginning with uridine. The chain is tRNA-2-methylthio-N(6)-dimethylallyladenosine synthase from Thiobacillus denitrificans (strain ATCC 25259 / T1).